The following is a 132-amino-acid chain: ATP synthase epsilon chain (132 aa).

The protein belongs to the ATPase epsilon chain family. As to quaternary structure, F-type ATPases have 2 components, CF(1) - the catalytic core - and CF(0) - the membrane proton channel. CF(1) has five subunits: alpha(3), beta(3), gamma(1), delta(1), epsilon(1). CF(0) has three main subunits: a, b and c.

The protein resides in the cell membrane. Produces ATP from ADP in the presence of a proton gradient across the membrane. The polypeptide is ATP synthase epsilon chain (atpC) (Bacillus sp. (strain PS3)).